A 375-amino-acid chain; its full sequence is Beta-1,3-N-acetylglucosaminyltransferase lunatic fringe (375 aa).

Topologically, residues 1 to 8 (MLKNWGKK) are cytoplasmic. Residues 9-29 (LLLSIVGATLTCLLVLVVDQQ) form a helical; Signal-anchor for type II membrane protein membrane-spanning segment. The Lumenal segment spans residues 30 to 375 (SRHMLETQSD…TPWCPWKAAY (346 aa)). The disordered stretch occupies residues 53 to 73 (DLDPANPGDGGDPANSAQDSG). R125 provides a ligand contact to substrate. N-linked (GlcNAc...) asparagine glycosylation is present at N163. Disulfide bonds link C164–C175 and C193–C256. D197 lines the substrate pocket. A Mn(2+)-binding site is contributed by D198. D286 is a catalytic residue. H310 provides a ligand contact to Mn(2+). C360 and C369 are disulfide-bonded.

Belongs to the glycosyltransferase 31 family. Mn(2+) is required as a cofactor. The cofactor is Co(2+). A soluble form may be derived from the membrane form by proteolytic processing. In terms of tissue distribution, detected in the neural tube, the eye and the otic vesicle, expression coincides with the region that produces the medial, intermediate and lateral neurons.

It is found in the golgi apparatus membrane. It catalyses the reaction 3-O-(alpha-L-fucosyl)-L-threonyl-[EGF-like domain protein] + UDP-N-acetyl-alpha-D-glucosamine = 3-O-(N-acetyl-beta-D-glucosaminyl-(1-&gt;3)-alpha-L-fucosyl)-L-threonyl-[EGF-like domain protein] + UDP + H(+). It carries out the reaction 3-O-(alpha-L-fucosyl)-L-seryl-[EGF-like domain protein] + UDP-N-acetyl-alpha-D-glucosamine = 3-O-(N-acetyl-beta-D-glucosaminyl-(1-&gt;3)-alpha-L-fucosyl)-L-seryl-[EGF-like domain protein] + UDP + H(+). Glycosyltransferase that initiates the elongation of O-linked fucose residues attached to EGF-like repeats in the extracellular domain of Notch molecules. Essential mediator of somite segmentation and patterning. May be involved in mesoderm development. This chain is Beta-1,3-N-acetylglucosaminyltransferase lunatic fringe (lfng), found in Xenopus laevis (African clawed frog).